The chain runs to 337 residues: Methylthioribose-1-phosphate isomerase (337 aa).

Residues 47 to 49, Arg81, and Gln184 contribute to the substrate site; that span reads RGA. Residue Asp225 is the Proton donor of the active site. Position 235–236 (235–236) interacts with substrate; it reads NK.

Belongs to the eIF-2B alpha/beta/delta subunits family. MtnA subfamily.

The enzyme catalyses 5-(methylsulfanyl)-alpha-D-ribose 1-phosphate = 5-(methylsulfanyl)-D-ribulose 1-phosphate. Its pathway is amino-acid biosynthesis; L-methionine biosynthesis via salvage pathway; L-methionine from S-methyl-5-thio-alpha-D-ribose 1-phosphate: step 1/6. Functionally, catalyzes the interconversion of methylthioribose-1-phosphate (MTR-1-P) into methylthioribulose-1-phosphate (MTRu-1-P). The sequence is that of Methylthioribose-1-phosphate isomerase from Synechococcus sp. (strain CC9605).